The chain runs to 120 residues: UPF0102 protein PTH_1707 (120 aa).

Belongs to the UPF0102 family.

This Pelotomaculum thermopropionicum (strain DSM 13744 / JCM 10971 / SI) protein is UPF0102 protein PTH_1707.